The chain runs to 322 residues: Glycerol-3-phosphate dehydrogenase [NAD(P)+] (322 aa).

The NADPH site is built by W11, R31, R32, and K101. Residues K101 and G130 each coordinate sn-glycerol 3-phosphate. Position 134 (A134) interacts with NADPH. Sn-glycerol 3-phosphate is bound by residues K184, D237, S247, R248, and N249. Residue K184 is the Proton acceptor of the active site. R248 contacts NADPH. NADPH is bound by residues V270 and E272.

The protein belongs to the NAD-dependent glycerol-3-phosphate dehydrogenase family.

It localises to the cytoplasm. It catalyses the reaction sn-glycerol 3-phosphate + NAD(+) = dihydroxyacetone phosphate + NADH + H(+). The catalysed reaction is sn-glycerol 3-phosphate + NADP(+) = dihydroxyacetone phosphate + NADPH + H(+). It participates in membrane lipid metabolism; glycerophospholipid metabolism. Its function is as follows. Catalyzes the reduction of the glycolytic intermediate dihydroxyacetone phosphate (DHAP) to sn-glycerol 3-phosphate (G3P), the key precursor for phospholipid synthesis. In Thermus thermophilus (strain ATCC BAA-163 / DSM 7039 / HB27), this protein is Glycerol-3-phosphate dehydrogenase [NAD(P)+].